The following is a 347-amino-acid chain: Protein RecA (347 aa).

67-74 contacts ATP; the sequence is GPESSGKT. The tract at residues 326-347 is disordered; it reads DKLLPGRAPSSEAQGTESGQEA. A compositionally biased stretch (polar residues) spans 336 to 347; sequence SEAQGTESGQEA.

The protein belongs to the RecA family.

The protein localises to the cytoplasm. Can catalyze the hydrolysis of ATP in the presence of single-stranded DNA, the ATP-dependent uptake of single-stranded DNA by duplex DNA, and the ATP-dependent hybridization of homologous single-stranded DNAs. It interacts with LexA causing its activation and leading to its autocatalytic cleavage. This Alkalilimnicola ehrlichii (strain ATCC BAA-1101 / DSM 17681 / MLHE-1) protein is Protein RecA.